A 1001-amino-acid polypeptide reads, in one-letter code: Transcription-repair-coupling factor (1001 aa).

A Helicase ATP-binding domain is found at 499–658; sequence DLSSHRVMDR…LSQIKGISSL (160 aa). 512 to 519 serves as a coordination point for ATP; sequence GDVGFGKT. A DEEH box motif is present at residues 611–614; it reads DEEH. The Helicase C-terminal domain occupies 679-835; that stretch reads LLKEIIYREL…SIAYHDLEIR (157 aa).

The protein in the N-terminal section; belongs to the UvrB family. It in the C-terminal section; belongs to the helicase family. RecG subfamily.

Its subcellular location is the cytoplasm. Its function is as follows. Couples transcription and DNA repair by recognizing RNA polymerase (RNAP) stalled at DNA lesions. Mediates ATP-dependent release of RNAP and its truncated transcript from the DNA, and recruitment of nucleotide excision repair machinery to the damaged site. The chain is Transcription-repair-coupling factor from Helicobacter pylori (strain J99 / ATCC 700824) (Campylobacter pylori J99).